A 497-amino-acid chain; its full sequence is UDP-N-acetylmuramoyl-L-alanyl-D-glutamate--2,6-diaminopimelate ligase (497 aa).

Leu27 and Ser29 together coordinate UDP-N-acetyl-alpha-D-muramoyl-L-alanyl-D-glutamate. Residue 116–122 (GTNGKTT) participates in ATP binding. UDP-N-acetyl-alpha-D-muramoyl-L-alanyl-D-glutamate is bound by residues Asn157, 158–159 (TT), Ser185, Gln191, and Arg193. Lys225 bears the N6-carboxylysine mark. Residues Arg392, 416-419 (DNPR), Gly467, and Glu471 contribute to the meso-2,6-diaminopimelate site. Residues 416 to 419 (DNPR) carry the Meso-diaminopimelate recognition motif motif.

It belongs to the MurCDEF family. MurE subfamily. Requires Mg(2+) as cofactor. Post-translationally, carboxylation is probably crucial for Mg(2+) binding and, consequently, for the gamma-phosphate positioning of ATP.

It is found in the cytoplasm. It carries out the reaction UDP-N-acetyl-alpha-D-muramoyl-L-alanyl-D-glutamate + meso-2,6-diaminopimelate + ATP = UDP-N-acetyl-alpha-D-muramoyl-L-alanyl-gamma-D-glutamyl-meso-2,6-diaminopimelate + ADP + phosphate + H(+). The protein operates within cell wall biogenesis; peptidoglycan biosynthesis. Its function is as follows. Catalyzes the addition of meso-diaminopimelic acid to the nucleotide precursor UDP-N-acetylmuramoyl-L-alanyl-D-glutamate (UMAG) in the biosynthesis of bacterial cell-wall peptidoglycan. This chain is UDP-N-acetylmuramoyl-L-alanyl-D-glutamate--2,6-diaminopimelate ligase, found in Buchnera aphidicola subsp. Schizaphis graminum (strain Sg).